The primary structure comprises 530 residues: C2H2-type transcription factor MSN2 (530 aa).

2 consecutive C2H2-type zinc fingers follow at residues 409–432 and 438–460; these read FVCD…RSLH and FECN…ARTH.

Its subcellular location is the nucleus. The protein resides in the cytoplasm. Transcription factor that acts as a key downstream transcription factor in the HOG1-MAPK pathway. Plays crucial roles in the regulation of conidiation, virulence and multi-stress responses. In addition to regulating the expression of genes specifically involved in stress-response, conidiation and virulence, controls also expression of cellular signaling factors. This is C2H2-type transcription factor MSN2 from Metarhizium robertsii (strain ARSEF 23 / ATCC MYA-3075) (Metarhizium anisopliae (strain ARSEF 23)).